We begin with the raw amino-acid sequence, 335 residues long: Capsular polysaccharide phosphotransferase WcwK (335 aa).

It belongs to the stealth family.

In Streptococcus pneumoniae, this protein is Capsular polysaccharide phosphotransferase WcwK (wcwK).